The following is a 444-amino-acid chain: MSHKPAHLLLVDDDPGLLKLLGLRLTSEGYSVVTAESGAEGLRVLNREKVDLVISDLRMDEMDGMQLFAEIQKVQPGMPVIILTAHGSIPDAVAATQQGVFSFLTKPVDKDALYQAIDDALEQSAPATDERWREAIVTRSPLMLRLLEQARLVAQSDVSVLINGQSGTGKEIFAQAIHNASPRNSKPFIAINCGALPEQLLESELFGHARGAFTGAVSNREGLFQAAEGGTLFLDEIGDMPAPLQVKLLRVLQERKVRPLGSNRDIDINVRIISATHRDLPKAMARGEFREDLYYRLNVVSLKIPALAERTEDIPLLANHLLRQAAERHKPFVRAFSTDAMKRLMTASWPGNVRQLVNVIEQCVALTSSPVISDALVEQALEGENTALPTFVEARNQFELNYLRKLLQITKGNVTHAARMAGRNRTEFYKLLSRHELDANDFKE.

Residues 7–121 (HLLLVDDDPG…ALYQAIDDAL (115 aa)) enclose the Response regulatory domain. Position 56 is a 4-aspartylphosphate (D56). Residues 136–366 (IVTRSPLMLR…VNVIEQCVAL (231 aa)) enclose the Sigma-54 factor interaction domain. ATP is bound by residues 164–171 (GQSGTGKE) and 227–236 (AEGGTLFLDE). Residues 414–433 (VTHAARMAGRNRTEFYKLLS) constitute a DNA-binding region (H-T-H motif).

In terms of processing, phosphorylated by GlrK.

The protein localises to the cytoplasm. In terms of biological role, member of the two-component regulatory system GlrR/GlrK that up-regulates transcription of the glmY sRNA when cells enter the stationary growth phase. Regulates glmY transcription by binding to three conserved sites in the purL-glmY intergenic region. The chain is Transcriptional regulatory protein GlrR (glrR) from Escherichia coli (strain K12).